We begin with the raw amino-acid sequence, 1076 residues long: Probable cellulose synthase A catalytic subunit 1 [UDP-forming] (1076 aa).

Residues Met-1 to Gln-267 lie on the Cytoplasmic side of the membrane. Zn(2+)-binding residues include Cys-41, Cys-44, Cys-60, Cys-63, Cys-68, Cys-71, Cys-83, and Cys-86. The RING-type; degenerate zinc finger occupies Cys-41–Lys-87. The interval His-119 to Tyr-179 is disordered. Residues Leu-268–Tyr-288 form a helical membrane-spanning segment. The Extracellular portion of the chain corresponds to Arg-289 to Asp-296. The chain crosses the membrane as a helical span at residues Ala-297 to Leu-317. Over Asp-318 to Thr-851 the chain is Cytoplasmic. Residues Ser-356, Lys-362, Glu-363, and Asp-392 each contribute to the UDP-alpha-D-glucose site. Asp-392 is an active-site residue. Residues Val-446–Val-473 are a coiled coil. Residue Lys-533 participates in UDP-alpha-D-glucose binding. Residues Lys-534 and Asp-558 each contribute to the Mn(2+) site. Asp-775 is a catalytic residue. A helical membrane pass occupies residues Ile-852 to Leu-872. At Leu-873–Asn-884 the chain is on the extracellular side. Residues Tyr-885 to Leu-905 traverse the membrane as a helical segment. At Arg-906–Gln-920 the chain is on the cytoplasmic side. The chain crosses the membrane as a helical span at residues Phe-921 to Val-941. The Extracellular portion of the chain corresponds to Leu-942–Thr-971. Asn-948 is a glycosylation site (N-linked (GlcNAc...) asparagine). The chain crosses the membrane as a helical span at residues Ser-972 to Ile-992. The Cytoplasmic segment spans residues Ser-993–Trp-1003. A helical membrane pass occupies residues Gly-1004–Leu-1024. At Lys-1025 to Arg-1033 the chain is on the extracellular side. Residues Thr-1034–Val-1054 form a helical membrane-spanning segment. At Lys-1055–Cys-1076 the chain is on the cytoplasmic side.

Belongs to the glycosyltransferase 2 family. Plant cellulose synthase subfamily. Zn(2+) is required as a cofactor. The cofactor is Mn(2+).

It is found in the cell membrane. It carries out the reaction [(1-&gt;4)-beta-D-glucosyl](n) + UDP-alpha-D-glucose = [(1-&gt;4)-beta-D-glucosyl](n+1) + UDP + H(+). It functions in the pathway glycan metabolism; plant cellulose biosynthesis. Functionally, catalytic subunit of cellulose synthase terminal complexes ('rosettes'), required for beta-1,4-glucan microfibril crystallization, a major mechanism of the cell wall formation. In Oryza sativa subsp. indica (Rice), this protein is Probable cellulose synthase A catalytic subunit 1 [UDP-forming] (CESA1).